The primary structure comprises 541 residues: MSAKDVKFGDSARSKMIAGVNVLADAVKVTLGPKGRNVVIDRSFGAPHITKDGVTVAKEISLKDKFENMGAQLVREVSSKTNDIAGDGTTTATVLAQAILNEGIKSVTAGMNPMDLKRGIDIAVKTVVENIRSIAKPADDFKAIEQVGSISANSDTTVGKLIAQAMEKVGKEGVITVEEGSGFEDALDVVEGMQFDRGYISPYFANKQDTLTAELENPFILLVDKKISNIRELISVLEAVAKTGKPLLIIAEDVEGEALATLVVNNMRGIIKVCAVKAPGFGDRRKAMLQDIAILTGATVISEEVGMSLEQATLQDLGTAHKITVSKENTVIVDGAGDAAAIAERVQQIRAQIEESTSEYDREKLQERVAKLAGGVAVIKIGAATEVEMKEKKDRVDDALHATRAAVEEGVVAGGGVALVRAVNALEGLKGANEDQTAGINILRRAIEAPLRQIVANAGDEPSVVINAVKNGEGNFGYNAATGEYGDMLEMGILDPAKVTRSALEHAASVAGLMLTTECMITDIPEDKPAAPDMGGMGGMM.

Residues 30–33 (TLGP), Lys-51, 87–91 (DGTTT), Gly-415, 479–481 (NAA), and Asp-495 contribute to the ATP site.

This sequence belongs to the chaperonin (HSP60) family. Forms a cylinder of 14 subunits composed of two heptameric rings stacked back-to-back. Interacts with the co-chaperonin GroES.

It is found in the cytoplasm. It carries out the reaction ATP + H2O + a folded polypeptide = ADP + phosphate + an unfolded polypeptide.. Together with its co-chaperonin GroES, plays an essential role in assisting protein folding. The GroEL-GroES system forms a nano-cage that allows encapsulation of the non-native substrate proteins and provides a physical environment optimized to promote and accelerate protein folding. This Acinetobacter baumannii (strain SDF) protein is Chaperonin GroEL.